Consider the following 729-residue polypeptide: Transcriptional activator ptaB (729 aa).

Pro residues predominate over residues 1 to 12 (MPQHPGLPPGHP). 4 disordered regions span residues 1–69 (MPQH…QAHA), 207–341 (AAAA…QNQA), 505–538 (LELSEQKQSPKVSKNLGKRAQQKQAQQAAPSLPE), and 614–729 (RGPQ…KGTA). Over residues 38–56 (PGGPQVTQGGPMMGMPPGA) the composition is skewed to low complexity. Pro residues predominate over residues 272–285 (APQPHPTPNPPPQQ). 2 stretches are compositionally biased toward low complexity: residues 286–300 (LPQAQQPGQQPHQQP) and 307–341 (QPQQQQSQQGQPQGQQQQMTPQEAQMKAQQTQNQA). Polar residues predominate over residues 614–625 (RGPQMNGPNQFA). Over residues 655-671 (GPPGMVQQGQMQPNVGQ) the composition is skewed to low complexity. Polar residues predominate over residues 672–682 (ATSASASPQVT).

Belongs to the MFG1 family. In terms of assembly, interacts with somA.

It localises to the nucleus. In terms of biological role, transcriptional regulator that forms a complex with somA to control biofilm formation. The polypeptide is Transcriptional activator ptaB (Aspergillus fumigatus (strain ATCC MYA-4609 / CBS 101355 / FGSC A1100 / Af293) (Neosartorya fumigata)).